Reading from the N-terminus, the 427-residue chain is Adenylosuccinate synthetase (427 aa).

Residues 12 to 18 (GDEGKGK) and 40 to 42 (GHT) contribute to the GTP site. Asp-13 (proton acceptor) is an active-site residue. Mg(2+)-binding residues include Asp-13 and Gly-40. Residues 13–16 (DEGK), 38–41 (NAGH), Thr-128, Arg-142, Gln-223, Thr-238, and Arg-302 each bind IMP. His-41 functions as the Proton donor in the catalytic mechanism. 298-304 (VTTGRDR) lines the substrate pocket. GTP contacts are provided by residues Arg-304, 330 to 332 (KLD), and 412 to 414 (GVG).

Belongs to the adenylosuccinate synthetase family. In terms of assembly, homodimer. Mg(2+) serves as cofactor.

Its subcellular location is the cytoplasm. It catalyses the reaction IMP + L-aspartate + GTP = N(6)-(1,2-dicarboxyethyl)-AMP + GDP + phosphate + 2 H(+). Its pathway is purine metabolism; AMP biosynthesis via de novo pathway; AMP from IMP: step 1/2. Functionally, plays an important role in the de novo pathway of purine nucleotide biosynthesis. Catalyzes the first committed step in the biosynthesis of AMP from IMP. This Streptomyces coelicolor (strain ATCC BAA-471 / A3(2) / M145) protein is Adenylosuccinate synthetase.